Here is an 812-residue protein sequence, read N- to C-terminus: Probable inorganic carbon transporter subunit DabA (812 aa).

4 residues coordinate Zn(2+): cysteine 337, aspartate 339, histidine 499, and cysteine 514.

This sequence belongs to the inorganic carbon transporter (TC 9.A.2) DabA family. As to quaternary structure, forms a complex with DabB. Zn(2+) serves as cofactor.

The protein localises to the cell inner membrane. Part of an energy-coupled inorganic carbon pump. The polypeptide is Probable inorganic carbon transporter subunit DabA (Xanthomonas euvesicatoria pv. vesicatoria (strain 85-10) (Xanthomonas campestris pv. vesicatoria)).